Here is a 228-residue protein sequence, read N- to C-terminus: 7-cyano-7-deazaguanine synthase (228 aa).

Position 7-17 (7-17 (LSGGLDSAVNL)) interacts with ATP. 4 residues coordinate Zn(2+): C192, C200, C203, and C206.

It belongs to the QueC family. Homodimer. Requires Zn(2+) as cofactor.

The enzyme catalyses 7-carboxy-7-deazaguanine + NH4(+) + ATP = 7-cyano-7-deazaguanine + ADP + phosphate + H2O + H(+). It participates in purine metabolism; 7-cyano-7-deazaguanine biosynthesis. Functionally, catalyzes the ATP-dependent conversion of 7-carboxy-7-deazaguanine (CDG) to 7-cyano-7-deazaguanine (preQ(0)). This is 7-cyano-7-deazaguanine synthase from Desulforamulus reducens (strain ATCC BAA-1160 / DSM 100696 / MI-1) (Desulfotomaculum reducens).